The sequence spans 119 residues: Large ribosomal subunit protein bL17 (119 aa).

It belongs to the bacterial ribosomal protein bL17 family. As to quaternary structure, part of the 50S ribosomal subunit. Contacts protein L32.

The protein is Large ribosomal subunit protein bL17 of Mesoplasma florum (strain ATCC 33453 / NBRC 100688 / NCTC 11704 / L1) (Acholeplasma florum).